A 186-amino-acid chain; its full sequence is Ribosome-recycling factor (186 aa).

Belongs to the RRF family.

It is found in the cytoplasm. Functionally, responsible for the release of ribosomes from messenger RNA at the termination of protein biosynthesis. May increase the efficiency of translation by recycling ribosomes from one round of translation to another. The sequence is that of Ribosome-recycling factor from Rickettsia massiliae (strain Mtu5).